Consider the following 432-residue polypeptide: Histidine--tRNA ligase (432 aa).

The protein belongs to the class-II aminoacyl-tRNA synthetase family. Homodimer.

The protein localises to the cytoplasm. The enzyme catalyses tRNA(His) + L-histidine + ATP = L-histidyl-tRNA(His) + AMP + diphosphate + H(+). The polypeptide is Histidine--tRNA ligase (Ralstonia nicotianae (strain ATCC BAA-1114 / GMI1000) (Ralstonia solanacearum)).